The sequence spans 218 residues: YlmG homolog protein 1-2, chloroplastic (218 aa).

The N-terminal 83 residues, 1-83 (MASFTTNSLA…TRSITTLVLL (83 aa)), are a transit peptide targeting the chloroplast. A run of 2 helical transmembrane segments spans residues 133 to 153 (LTVV…VLMV) and 187 to 207 (IIPP…AVLG).

Belongs to the YggT family.

It is found in the plastid. The protein localises to the chloroplast thylakoid membrane. Not required for the biogenesis and accumulation of native cytochrome b6 in the thylakoid membrane. Not functionally involved in the pathway for covalent binding of the c-type heme to cytochrome b6. The protein is YlmG homolog protein 1-2, chloroplastic of Arabidopsis thaliana (Mouse-ear cress).